A 737-amino-acid chain; its full sequence is Autolysin (737 aa).

Basic and acidic residues predominate over residues 1–13; sequence MKKESMSRIERRK. Disordered regions lie at residues 1–28, 51–132, and 335–360; these read MKKE…KKST, AEAT…TDSS, and PSSG…SGTN. A signal peptide spans 1 to 53; the sequence is MKKESMSRIERRKAQQRKKTPVQWKKSTTLFSSALIVSSVGTPVALLPVTAEA. Over residues 67–117 the composition is skewed to low complexity; the sequence is PTTETGLVETPTTETTPGTTEQPTTDSSTTTESTTESSKETPTTPSTEQPT. Over residues 118–132 the composition is skewed to polar residues; sequence ADSTTPVESGTTDSS. The span at 339-352 shows a compositional bias: gly residues; that stretch reads GNTGGGTVNPGTGG. One can recognise a LysM 1 domain in the interval 361–404; the sequence is TYYTVKSGDTLNKIAAQYGVSVANLRSWNGISGDLIFVGQKLIV. Residues 409 to 429 form a disordered region; that stretch reads SGNTGGSGSGGSNNNQSGTNT. The segment covering 410–419 has biased composition (gly residues); sequence GNTGGSGSGG. The segment covering 420-429 has biased composition (low complexity); sequence SNNNQSGTNT. 5 LysM domains span residues 429 to 472, 497 to 540, 565 to 608, 631 to 674, and 693 to 736; these read TYYT…KLIV, TYYT…KIIV, TSYT…TIIV, and KRHT…TLKV.

Belongs to the glycosyl hydrolase 73 family.

It localises to the secreted. Hydrolyzes the cell wall of E.faecalis and M.lysodeikticus. May play an important role in cell wall growth and cell separation. The protein is Autolysin of Enterococcus faecalis (strain ATCC 700802 / V583).